Consider the following 574-residue polypeptide: Enolase 4 (574 aa).

The span at 165 to 175 shows a compositional bias: basic and acidic residues; the sequence is EKERRQMEREA. Residues 165–221 are disordered; sequence EKERRQMEREASPMPLQPEPSPVTSPAPGKKKGSGKGKKAAVVEKPIPPEETPEAVV. Positions 179-189 are enriched in pro residues; the sequence is PLQPEPSPVTS. The segment covering 193–203 has biased composition (basic residues); sequence GKKKGSGKGKK. Residue E287 coordinates substrate. K467 serves as the catalytic Proton acceptor. K518 contacts substrate.

The protein belongs to the enolase family.

The catalysed reaction is (2R)-2-phosphoglycerate = phosphoenolpyruvate + H2O. It participates in carbohydrate degradation; glycolysis; pyruvate from D-glyceraldehyde 3-phosphate: step 4/5. The protein is Enolase 4 (eno4) of Xenopus tropicalis (Western clawed frog).